A 110-amino-acid polypeptide reads, in one-letter code: U9-agatoxin-Ao1a (110 aa).

The N-terminal stretch at 1–17 is a signal peptide; it reads MKLLLAIAGLFLVQTLA. Positions 18–38 are excised as a propeptide; sequence EDVRAHEESSFLAAVAPEEQR. Disulfide bonds link C40-C54, C47-C60, C51-C87, C53-C72, and C62-C70.

Belongs to the neurotoxin 37 family. As to expression, expressed by the venom gland.

It is found in the secreted. In Agelena orientalis (Funnel-web spider), this protein is U9-agatoxin-Ao1a.